The chain runs to 165 residues: Thiol peroxidase (165 aa).

Positions 18–165 constitute a Thioredoxin domain; the sequence is PAVGSPAPAF…YEAALAALGA (148 aa). Cys-60 acts as the Cysteine sulfenic acid (-SOH) intermediate in catalysis. Cys-60 and Cys-93 are joined by a disulfide.

The protein belongs to the peroxiredoxin family. Tpx subfamily. As to quaternary structure, homodimer.

It carries out the reaction a hydroperoxide + [thioredoxin]-dithiol = an alcohol + [thioredoxin]-disulfide + H2O. Its function is as follows. Thiol-specific peroxidase that catalyzes the reduction of hydrogen peroxide and organic hydroperoxides to water and alcohols, respectively. Plays a role in cell protection against oxidative stress by detoxifying peroxides. In Mycobacterium bovis (strain ATCC BAA-935 / AF2122/97), this protein is Thiol peroxidase.